Consider the following 219-residue polypeptide: Dynein light chain Tctex-type 4 (219 aa).

The tract at residues 1-84 (MAGRPVPAGR…RRPSLGPVPP (84 aa)) is disordered. Residues 10 to 20 (RQEEELAKDPG) are compositionally biased toward basic and acidic residues. Position 64 is a phosphoserine (S64).

This sequence belongs to the dynein light chain Tctex-type family. As to quaternary structure, interacts with ENG/endoglin, TGFBR2 and TGFBR3. Interacts with PPP1CC.

The protein resides in the cell projection. Its subcellular location is the cilium. It is found in the flagellum. It localises to the cytoplasmic vesicle. The protein localises to the secretory vesicle. The protein resides in the acrosome. Its subcellular location is the cytoplasm. It is found in the cytoskeleton. It localises to the cilium axoneme. The protein localises to the nucleus. The protein resides in the microtubule organizing center. In Sus scrofa (Pig), this protein is Dynein light chain Tctex-type 4 (DYNLT4).